Consider the following 343-residue polypeptide: tRNA N6-adenosine threonylcarbamoyltransferase (343 aa).

Residues His-120 and His-124 each coordinate Fe cation. Substrate contacts are provided by residues 142–146 (VVSGG), Asp-175, Gly-188, Asp-192, and Asn-281. Position 310 (Asp-310) interacts with Fe cation.

It belongs to the KAE1 / TsaD family. Fe(2+) is required as a cofactor.

It is found in the cytoplasm. It carries out the reaction L-threonylcarbamoyladenylate + adenosine(37) in tRNA = N(6)-L-threonylcarbamoyladenosine(37) in tRNA + AMP + H(+). In terms of biological role, required for the formation of a threonylcarbamoyl group on adenosine at position 37 (t(6)A37) in tRNAs that read codons beginning with adenine. Is involved in the transfer of the threonylcarbamoyl moiety of threonylcarbamoyl-AMP (TC-AMP) to the N6 group of A37, together with TsaE and TsaB. TsaD likely plays a direct catalytic role in this reaction. This Bacillus thuringiensis subsp. konkukian (strain 97-27) protein is tRNA N6-adenosine threonylcarbamoyltransferase.